A 105-amino-acid polypeptide reads, in one-letter code: Large ribosomal subunit protein bL21 (105 aa).

Belongs to the bacterial ribosomal protein bL21 family. In terms of assembly, part of the 50S ribosomal subunit. Contacts protein L20.

This protein binds to 23S rRNA in the presence of protein L20. This is Large ribosomal subunit protein bL21 from Methylobacterium sp. (strain 4-46).